We begin with the raw amino-acid sequence, 227 residues long: ATP-dependent dethiobiotin synthetase BioD (227 aa).

13 to 18 (DIGKTY) lines the ATP pocket. Residue threonine 17 participates in Mg(2+) binding. Lysine 38 is a catalytic residue. Serine 42 lines the substrate pocket. ATP is bound by residues aspartate 55, 116–119 (EGSG), and 179–180 (NN). Mg(2+)-binding residues include aspartate 55 and glutamate 116.

This sequence belongs to the dethiobiotin synthetase family. As to quaternary structure, homodimer. Mg(2+) is required as a cofactor.

Its subcellular location is the cytoplasm. The catalysed reaction is (7R,8S)-7,8-diammoniononanoate + CO2 + ATP = (4R,5S)-dethiobiotin + ADP + phosphate + 3 H(+). It functions in the pathway cofactor biosynthesis; biotin biosynthesis; biotin from 7,8-diaminononanoate: step 1/2. Its function is as follows. Catalyzes a mechanistically unusual reaction, the ATP-dependent insertion of CO2 between the N7 and N8 nitrogen atoms of 7,8-diaminopelargonic acid (DAPA, also called 7,8-diammoniononanoate) to form a ureido ring. In Clostridium botulinum (strain ATCC 19397 / Type A), this protein is ATP-dependent dethiobiotin synthetase BioD.